Consider the following 37-residue polypeptide: Cytochrome bd-I ubiquinol oxidase subunit X (37 aa).

Residues F4–L24 form a helical membrane-spanning segment.

The protein belongs to the cytochrome ubiquinol oxidase subunit X family. As to quaternary structure, may be a subunit of cytochrome bd-I ubiquinol oxidase. Probably interacts with CydA and CydB.

It is found in the cell inner membrane. The enzyme catalyses 2 a ubiquinol + O2(in) + 4 H(+)(in) = 2 a ubiquinone + 2 H2O(in) + 4 H(+)(out). Its pathway is energy metabolism; oxidative phosphorylation. Functionally, required for correct functioning of cytochrome bd-I oxidase. This protein and AppX may have some functional overlap. The protein is Cytochrome bd-I ubiquinol oxidase subunit X (cydX) of Escherichia coli (strain K12).